A 138-amino-acid chain; its full sequence is MSGSASFEGGVFSPYLTGRLPPWAGVRQNVMGSTVDGRPVQPANSSTLTYATLSSSPLDAAAAAAATAAANTILGMGYYGSIVANSSSSNNPSTLAEDKLLVLLAQLEALTQRLGELSKQVAQLREQTESAVATAKSK.

A coiled-coil region spans residues 100-127; that stretch reads LLVLLAQLEALTQRLGELSKQVAQLREQ.

The protein belongs to the adenoviridae hexon-interlacing protein family. Homotrimer. Interacts with hexon protein; this interaction tethers the hexons together. Self-interacts with adjacent proteins. Interacts with kinesin light chain KLC1; this interaction leads to capsid disruption at the nuclear pore complex during virus entry into host cell.

It localises to the virion. It is found in the host nucleus. Structural component of the virion that acts as a cement protein on the capsid exterior and forms triskelion structures consisting of three molecules that stabilize three hexon trimers at the center of each icosahedral facet and fixes the peripentonal hexons. Dispensable for assembly. During virus entry, recruits the anterograde motor kinesin-1 to the capsid docked at the nuclear pore complex thereby subjecting the docked capsid to a pulling force. The resulting tension leads to capsid disruption, dispersion of capsid fragments toward cell periphery and eventually viral DNA entry into the host nucleus. This chain is Hexon-interlacing protein, found in Human adenovirus B serotype 7 (HAdV-7).